Consider the following 360-residue polypeptide: Phenylalanine--tRNA ligase alpha subunit (360 aa).

Residue Glu-260 coordinates Mg(2+).

Belongs to the class-II aminoacyl-tRNA synthetase family. Phe-tRNA synthetase alpha subunit type 1 subfamily. In terms of assembly, tetramer of two alpha and two beta subunits. Mg(2+) serves as cofactor.

The protein localises to the cytoplasm. It carries out the reaction tRNA(Phe) + L-phenylalanine + ATP = L-phenylalanyl-tRNA(Phe) + AMP + diphosphate + H(+). This chain is Phenylalanine--tRNA ligase alpha subunit, found in Methylobacterium sp. (strain 4-46).